The following is a 783-amino-acid chain: MNTTTYIGHCRISFFNISSQGFWENLKSPDVVFGYSLPLLEIQIILIFFCIVMSHMFLRCIGVSQIVSYMIAGLILGPQLFDILEKSSGKLSADPALDGTAALRCISVFGRLMFTFLMTVRTSRRVAFHSGKLPVVIGIVSFFAPLFSLSFLNLFTDNIDPHYMSLDKALAERTVIVITQSQILLPSTTYILLELKIINSELGRLALSASAINDMLGIFAMIVATTQATYIHVSHAIAYRDLVAVIIFFLIVFFVFKPMVQWIIDRTPEDKPVEDIYIHAVILTAFASAAYFVFFNMKYVLGPLIIGIIIPEGPPLGSALEAKFERLTMNVFLPISITFSAMRCDGLRILSQFTDIYFNIFLTLLILVIKLVACLTLCLYYKLPRSESLAVSLILSYKSFVEFVLYEAVLEEKFISQATYAFLILYSLLSAGIVPMVVRSMYDPKRKYVNYQKRDILHLEANSGLRILTCLHKPENVSETIAFLQLFSSPIHDFPIAVTVLHLVKLVGQINPIIVSHDKKLKRLHKNSYIHTANLAFRQFMQESLESVTVTTFTAFSHENLMHEDICTLALDRTTSMIVVPSGRKWTVDGMFESDDLAARQLNQSLLDRAPCSIGILVDRGQFSRKSYVTSKNRYNIDVGVLFIGGKDDREALSLVKRMKYNPRVRVTVIRLIFDHEIESEWDYILDNEGLKDLKSTESNEDILYTERIVTSVVEVVKAVQLLAEEYDLMVVGRDHDMTSQDLSGLTEWVELPELGVIGDLLAARDLNSKVSVLVVQQQQQQT.

12 consecutive transmembrane segments (helical) span residues V31 to I51, I61 to F81, A101 to V120, V135 to F155, V175 to L195, L205 to T225, A244 to I264, I276 to F295, V300 to A322, I360 to Y380, L389 to V409, and A418 to V438.

Belongs to the monovalent cation:proton antiporter 2 (CPA2) transporter (TC 2.A.37) family. CHX (TC 2.A.37.4) subfamily. Specifically expressed in pollen.

Its subcellular location is the membrane. In terms of biological role, may operate as a cation/H(+) antiporter. The polypeptide is Cation/H(+) antiporter 11 (CHX11) (Arabidopsis thaliana (Mouse-ear cress)).